The chain runs to 267 residues: 27 kDa core protein (267 aa).

Belongs to the chordopoxvirinae D3 family.

It localises to the virion. In terms of biological role, late protein which is part of a large complex required for early virion morphogenesis. This complex participates in the formation of virosomes and the incorporation of virosomal contents into nascent immature virions. The chain is 27 kDa core protein from Canarypox virus (CNPV).